The sequence spans 156 residues: MKCRLIATGERAPAWVAQGFAEYQKRLSHWMPLELVEIEPGLRGKGRDAQRAIDDEGRRVLAALPKNAHVVALDVPGRPLSSEQLAQRMEHWRGQGRDLAFLIGGPEGHAADVVKSANESWSIGPLTLPHMLVRLIVAEQLYRAAAMLANHPYHRA.

S-adenosyl-L-methionine is bound by residues Leu-73, Gly-104, and 123-128 (IGPLTL).

The protein belongs to the RNA methyltransferase RlmH family. As to quaternary structure, homodimer.

Its subcellular location is the cytoplasm. The enzyme catalyses pseudouridine(1915) in 23S rRNA + S-adenosyl-L-methionine = N(3)-methylpseudouridine(1915) in 23S rRNA + S-adenosyl-L-homocysteine + H(+). Specifically methylates the pseudouridine at position 1915 (m3Psi1915) in 23S rRNA. The chain is Ribosomal RNA large subunit methyltransferase H from Xanthomonas campestris pv. campestris (strain 8004).